Consider the following 382-residue polypeptide: Dual-specificity RNA methyltransferase RlmN (382 aa).

Glutamate 91 serves as the catalytic Proton acceptor. One can recognise a Radical SAM core domain in the interval 97-339; sequence ETDRGTLCIS…TTVRKTRGDD (243 aa). A disulfide bridge connects residues cysteine 104 and cysteine 344. Residues cysteine 111, cysteine 115, and cysteine 118 each contribute to the [4Fe-4S] cluster site. S-adenosyl-L-methionine contacts are provided by residues 165-166, serine 197, 219-221, and asparagine 301; these read GE and SLH. Cysteine 344 (S-methylcysteine intermediate) is an active-site residue.

Belongs to the radical SAM superfamily. RlmN family. [4Fe-4S] cluster serves as cofactor.

Its subcellular location is the cytoplasm. It catalyses the reaction adenosine(2503) in 23S rRNA + 2 reduced [2Fe-2S]-[ferredoxin] + 2 S-adenosyl-L-methionine = 2-methyladenosine(2503) in 23S rRNA + 5'-deoxyadenosine + L-methionine + 2 oxidized [2Fe-2S]-[ferredoxin] + S-adenosyl-L-homocysteine. It carries out the reaction adenosine(37) in tRNA + 2 reduced [2Fe-2S]-[ferredoxin] + 2 S-adenosyl-L-methionine = 2-methyladenosine(37) in tRNA + 5'-deoxyadenosine + L-methionine + 2 oxidized [2Fe-2S]-[ferredoxin] + S-adenosyl-L-homocysteine. Specifically methylates position 2 of adenine 2503 in 23S rRNA and position 2 of adenine 37 in tRNAs. m2A2503 modification seems to play a crucial role in the proofreading step occurring at the peptidyl transferase center and thus would serve to optimize ribosomal fidelity. The protein is Dual-specificity RNA methyltransferase RlmN of Polaromonas sp. (strain JS666 / ATCC BAA-500).